The following is a 435-amino-acid chain: U-box domain-containing protein 36 (435 aa).

Positions 227–345 form a coiled coil; it reads EAEASKRKAR…LKGKREEEEA (119 aa). In terms of domain architecture, U-box spans 352–426; that stretch reads EPPQYFICPI…QEWLQLRELL (75 aa).

It carries out the reaction S-ubiquitinyl-[E2 ubiquitin-conjugating enzyme]-L-cysteine + [acceptor protein]-L-lysine = [E2 ubiquitin-conjugating enzyme]-L-cysteine + N(6)-ubiquitinyl-[acceptor protein]-L-lysine.. Its pathway is protein modification; protein ubiquitination. Functionally, functions as an E3 ubiquitin ligase. This Arabidopsis thaliana (Mouse-ear cress) protein is U-box domain-containing protein 36 (PUB36).